The chain runs to 401 residues: Imidazolonepropionase (401 aa).

H70 and H72 together coordinate Fe(3+). Residues H70 and H72 each contribute to the Zn(2+) site. 4-imidazolone-5-propanoate is bound by residues R79, Y142, and H175. Y142 serves as a coordination point for N-formimidoyl-L-glutamate. Residue H240 coordinates Fe(3+). H240 provides a ligand contact to Zn(2+). Q243 serves as a coordination point for 4-imidazolone-5-propanoate. D315 contacts Fe(3+). A Zn(2+)-binding site is contributed by D315. The N-formimidoyl-L-glutamate site is built by N317 and G319. T320 provides a ligand contact to 4-imidazolone-5-propanoate.

The protein belongs to the metallo-dependent hydrolases superfamily. HutI family. The cofactor is Zn(2+). It depends on Fe(3+) as a cofactor.

It localises to the cytoplasm. The catalysed reaction is 4-imidazolone-5-propanoate + H2O = N-formimidoyl-L-glutamate. It participates in amino-acid degradation; L-histidine degradation into L-glutamate; N-formimidoyl-L-glutamate from L-histidine: step 3/3. In terms of biological role, catalyzes the hydrolytic cleavage of the carbon-nitrogen bond in imidazolone-5-propanoate to yield N-formimidoyl-L-glutamate. It is the third step in the universal histidine degradation pathway. In Caulobacter sp. (strain K31), this protein is Imidazolonepropionase.